A 301-amino-acid chain; its full sequence is Phosphoglycolate phosphatase 2 (301 aa).

Asp19 (nucleophile) is an active-site residue.

The protein belongs to the HAD-like hydrolase superfamily. CbbY/CbbZ/Gph/YieH family.

The catalysed reaction is 2-phosphoglycolate + H2O = glycolate + phosphate. Its function is as follows. Dephosphorylates 2-phosphoglycolate, but does not contribute to photorespiratory metabolism. This Arabidopsis thaliana (Mouse-ear cress) protein is Phosphoglycolate phosphatase 2 (PGLP2).